Here is a 462-residue protein sequence, read N- to C-terminus: Phosphoglucosamine mutase (462 aa).

Catalysis depends on S112, which acts as the Phosphoserine intermediate. 4 residues coordinate Mg(2+): S112, D250, D252, and D254. S112 carries the phosphoserine modification.

This sequence belongs to the phosphohexose mutase family. It depends on Mg(2+) as a cofactor. Activated by phosphorylation.

It carries out the reaction alpha-D-glucosamine 1-phosphate = D-glucosamine 6-phosphate. Functionally, catalyzes the conversion of glucosamine-6-phosphate to glucosamine-1-phosphate. The sequence is that of Phosphoglucosamine mutase from Parasynechococcus marenigrum (strain WH8102).